An 89-amino-acid polypeptide reads, in one-letter code: Small ribosomal subunit protein uS15 (89 aa).

It belongs to the universal ribosomal protein uS15 family. As to quaternary structure, part of the 30S ribosomal subunit. Forms a bridge to the 50S subunit in the 70S ribosome, contacting the 23S rRNA.

In terms of biological role, one of the primary rRNA binding proteins, it binds directly to 16S rRNA where it helps nucleate assembly of the platform of the 30S subunit by binding and bridging several RNA helices of the 16S rRNA. Its function is as follows. Forms an intersubunit bridge (bridge B4) with the 23S rRNA of the 50S subunit in the ribosome. The sequence is that of Small ribosomal subunit protein uS15 from Methylobacterium sp. (strain 4-46).